We begin with the raw amino-acid sequence, 296 residues long: m7GpppN-mRNA hydrolase NUDT17 (296 aa).

Residues 90-236 (GRGVDVGVAV…DSGSPCGPLP (147 aa)) enclose the Nudix hydrolase domain. The Nudix box motif lies at 129–150 (GHVELGEQLLEAGLRELQEETG). Residues Glu144 and Glu148 each coordinate Mg(2+).

It belongs to the Nudix hydrolase family. It depends on Mg(2+) as a cofactor. Mn(2+) serves as cofactor.

The enzyme catalyses a 5'-end (N(7)-methyl 5'-triphosphoguanosine)-ribonucleoside in mRNA + H2O = N(7)-methyl-GDP + a 5'-end phospho-ribonucleoside in mRNA + 2 H(+). Functionally, acts as a decapping enzyme capable of hydrolyzing monomethylated capped RNAs (in vitro). Hydrolyzes monomethylated capped RNA after alpha and beta phosphates to form N(7)-methyl-GDP. Shows low activity towards unmethylated capped RNA. This Xenopus laevis (African clawed frog) protein is m7GpppN-mRNA hydrolase NUDT17 (nudt17).